A 576-amino-acid polypeptide reads, in one-letter code: V-type ATP synthase alpha chain (576 aa).

Residue 238–245 (GPFGAGKT) coordinates ATP.

It belongs to the ATPase alpha/beta chains family.

It carries out the reaction ATP + H2O + 4 H(+)(in) = ADP + phosphate + 5 H(+)(out). In terms of biological role, produces ATP from ADP in the presence of a proton gradient across the membrane. The V-type alpha chain is a catalytic subunit. This chain is V-type ATP synthase alpha chain, found in Borrelia turicatae (strain 91E135).